The chain runs to 344 residues: MNTPVRLTQYSHGAGCGCKISPKVLEIILAGSGAQNLDPRLWVGNASRDDAAVYALDDQRGVVSTTDFFMPIVDDPFDFGRIAATNAISDIYAMGGDPLLAIAILGWPVNVLPPEVAREVVRGGRAACDEAGIALAGGHSIDAPEPIFGLAVTGVVDKARLKRNDTATAGCRLYLTKPLGIGILTTAEKKSRLRPEDVNLARDWMCTLNKPGSRFGALAGVKAMTDVTGFGLLGHLVEMADGSGVSARIEYAKVPRLPGVEHYLAEGCVPGGTGRNFDSYGARIAPLPQDRVDLLCDPQTSGGLLVAVEPAGEAEFLAAAGELGLRLEPIGELVAQRPYAVEVL.

The active site involves C16. ATP is bound by residues K19 and 47–49 (SRD). Position 50 (D50) interacts with Mg(2+). Residues D67, D90, and 138 to 140 (GHS) each bind ATP. A Mg(2+)-binding site is contributed by D90. D226 is a binding site for Mg(2+).

It belongs to the selenophosphate synthase 1 family. Class I subfamily. Homodimer. Mg(2+) is required as a cofactor.

It carries out the reaction hydrogenselenide + ATP + H2O = selenophosphate + AMP + phosphate + 2 H(+). In terms of biological role, synthesizes selenophosphate from selenide and ATP. This chain is Selenide, water dikinase, found in Bordetella bronchiseptica (strain ATCC BAA-588 / NCTC 13252 / RB50) (Alcaligenes bronchisepticus).